A 302-amino-acid polypeptide reads, in one-letter code: Protein TILLER ANGLE CONTROL 1 (302 aa).

The IGT motif motif lies at 57–63; that stretch reads GILTIGT. 2 disordered regions span residues 82 to 115 and 159 to 180; these read ESEE…VEDE and EGSS…KNKK. Acidic residues predominate over residues 99-115; the sequence is DDDDDDDEHYDHSVEDE. Residues 162–175 show a composition bias toward polar residues; sequence SEISTKPDQSANDQ.

It belongs to the TAC family. As to expression, highly expressed in flower buds. Expressed in branch attachment sites, vegetative buds and young fruits.

Functionally, involved in the regulation of axillary shoot growth angle. Promotes horizontal shoot growth. The sequence is that of Protein TILLER ANGLE CONTROL 1 from Prunus persica (Peach).